A 161-amino-acid chain; its full sequence is Assembly protein P7 (161 aa).

In terms of assembly, homodimer. Part of the packaging complex composed of RDRP, P4 and P7. Interacts with RDRP.

It is found in the virion. Its function is as follows. Assembly protein part of the packaging complex that packages the viral RNA segments, replicate them into a double-stranded form and transcribe them. Required for efficient procapsid assembly. Necessary for stable packaging. May stabilize the RNA-dependent RNA polymerase (RdRP) in its position at the three-fold axis on the inner side of empty-unexpanded procapsids. Could play a role in viral RNA recognition. Seems to be involved in the regulation of plus strand synthesis (transcription) as a fidelity factor. The protein is Assembly protein P7 (P7) of Pseudomonas phage phi6 (Bacteriophage phi-6).